A 283-amino-acid chain; its full sequence is Polyamine aminopropyltransferase (283 aa).

A PABS domain is found at E2–K237. Position 31 (Q31) interacts with S-methyl-5'-thioadenosine. Residues H62 and D86 each contribute to the spermidine site. S-methyl-5'-thioadenosine-binding positions include E106 and D137–G138. The Proton acceptor role is filled by D155. D155 to D158 contacts spermidine. Position 162 (P162) interacts with S-methyl-5'-thioadenosine.

The protein belongs to the spermidine/spermine synthase family. Homodimer or homotetramer.

It localises to the cytoplasm. The enzyme catalyses S-adenosyl 3-(methylsulfanyl)propylamine + putrescine = S-methyl-5'-thioadenosine + spermidine + H(+). The protein operates within amine and polyamine biosynthesis; spermidine biosynthesis; spermidine from putrescine: step 1/1. Catalyzes the irreversible transfer of a propylamine group from the amino donor S-adenosylmethioninamine (decarboxy-AdoMet) to putrescine (1,4-diaminobutane) to yield spermidine. The protein is Polyamine aminopropyltransferase of Clostridium perfringens (strain SM101 / Type A).